The following is a 128-amino-acid chain: Large ribosomal subunit protein eL22 (128 aa).

The residue at position 62 (T62) is a Phosphothreonine. S66 is modified (phosphoserine). K69 carries the N6-succinyllysine modification.

It belongs to the eukaryotic ribosomal protein eL22 family. In terms of assembly, component of the large ribosomal subunit.

Its subcellular location is the cytoplasm. Functionally, component of the large ribosomal subunit. The ribosome is a large ribonucleoprotein complex responsible for the synthesis of proteins in the cell. The polypeptide is Large ribosomal subunit protein eL22 (RPL22) (Sus scrofa (Pig)).